A 331-amino-acid polypeptide reads, in one-letter code: Phosphate acyltransferase (331 aa).

This sequence belongs to the PlsX family. Homodimer. Probably interacts with PlsY.

Its subcellular location is the cytoplasm. It catalyses the reaction a fatty acyl-[ACP] + phosphate = an acyl phosphate + holo-[ACP]. It participates in lipid metabolism; phospholipid metabolism. Functionally, catalyzes the reversible formation of acyl-phosphate (acyl-PO(4)) from acyl-[acyl-carrier-protein] (acyl-ACP). This enzyme utilizes acyl-ACP as fatty acyl donor, but not acyl-CoA. In Chlorobaculum tepidum (strain ATCC 49652 / DSM 12025 / NBRC 103806 / TLS) (Chlorobium tepidum), this protein is Phosphate acyltransferase.